The sequence spans 207 residues: FMN-dependent NADH:quinone oxidoreductase (207 aa).

FMN is bound by residues S10, 16–18, 96–99, and 141–144; these read SIS, MYNL, and SRGG.

It belongs to the azoreductase type 1 family. In terms of assembly, homodimer. FMN is required as a cofactor.

The catalysed reaction is 2 a quinone + NADH + H(+) = 2 a 1,4-benzosemiquinone + NAD(+). It catalyses the reaction N,N-dimethyl-1,4-phenylenediamine + anthranilate + 2 NAD(+) = 2-(4-dimethylaminophenyl)diazenylbenzoate + 2 NADH + 2 H(+). Functionally, quinone reductase that provides resistance to thiol-specific stress caused by electrophilic quinones. Also exhibits azoreductase activity. Catalyzes the reductive cleavage of the azo bond in aromatic azo compounds to the corresponding amines. The chain is FMN-dependent NADH:quinone oxidoreductase from Nostoc sp. (strain PCC 7120 / SAG 25.82 / UTEX 2576).